A 104-amino-acid polypeptide reads, in one-letter code: Biogenesis of lysosome-related organelles complex 1 subunit BLS1 (104 aa).

The protein belongs to the BLOC1S1 family. Component of the biogenesis of lysosome-related organelles complex-1 (BLOC-1).

The protein resides in the endosome. In terms of biological role, component of the biogenesis of lysosome-related organelles complex-1 (BLOC-1), a complex involved in endosomal cargo sorting. The protein is Biogenesis of lysosome-related organelles complex 1 subunit BLS1 (BLS1) of Kluyveromyces lactis (strain ATCC 8585 / CBS 2359 / DSM 70799 / NBRC 1267 / NRRL Y-1140 / WM37) (Yeast).